Here is a 287-residue protein sequence, read N- to C-terminus: Myogenin (287 aa).

Phosphoserine; by CaMK2G is present on residues S77 and S79. Residues 81-132 (DRRRAATLREKRRLKKVNEAFEALKRSTLLNPNQRLPKVEILRSAIQYIERL) form the bHLH domain. T87 is modified (phosphothreonine; by CaMK2G).

Homodimer and heterodimer with E12; heterodimerization enhances MYOG DNA-binding and transcriptional activities. Interacts with SMARCA4/BRG1/BAF190A. Interacts (via C-terminal region) with SSRP1 and SUPT16H; the interaction is indicative of an interaction with the FACT complex. Interacts with CSRP3. In terms of processing, phosphorylated by CAMK2G on threonine and serine amino acids in a muscle activity-dependent manner. Phosphorylation of Thr-87 impairs both DNA-binding and trans-activation functions in contracting muscles. Expressed in muscle (at protein level).

It localises to the nucleus. Acts as a transcriptional activator that promotes transcription of muscle-specific target genes and plays a role in muscle differentiation, cell cycle exit and muscle atrophy. Essential for the development of functional embryonic skeletal fiber muscle differentiation. However is dispensable for postnatal skeletal muscle growth; phosphorylation by CAMK2G inhibits its transcriptional activity in respons to muscle activity. Required for the recruitment of the FACT complex to muscle-specific promoter regions, thus promoting gene expression initiation. During terminal myoblast differentiation, plays a role as a strong activator of transcription at loci with an open chromatin structure previously initiated by MYOD1. Together with MYF5 and MYOD1, co-occupies muscle-specific gene promoter core regions during myogenesis. Also cooperates with myocyte-specific enhancer factor MEF2D and BRG1-dependent recruitment of SWI/SNF chromatin-remodeling enzymes to alter chromatin structure at myogenic late gene promoters. Facilitates cell cycle exit during terminal muscle differentiation through the up-regulation of miR-20a expression, which in turn represses genes involved in cell cycle progression. Binds to the E-box containing (E1) promoter region of the miR-20a gene. Also plays a role in preventing reversal of muscle cell differentiation. Contributes to the atrophy-related gene expression in adult denervated muscles. Induces fibroblasts to differentiate into myoblasts. In Rattus norvegicus (Rat), this protein is Myogenin (Myog).